The following is a 359-amino-acid chain: S-adenosylmethionine:tRNA ribosyltransferase-isomerase (359 aa).

It belongs to the QueA family. Monomer.

It is found in the cytoplasm. It catalyses the reaction 7-aminomethyl-7-carbaguanosine(34) in tRNA + S-adenosyl-L-methionine = epoxyqueuosine(34) in tRNA + adenine + L-methionine + 2 H(+). It functions in the pathway tRNA modification; tRNA-queuosine biosynthesis. Its function is as follows. Transfers and isomerizes the ribose moiety from AdoMet to the 7-aminomethyl group of 7-deazaguanine (preQ1-tRNA) to give epoxyqueuosine (oQ-tRNA). In Alcanivorax borkumensis (strain ATCC 700651 / DSM 11573 / NCIMB 13689 / SK2), this protein is S-adenosylmethionine:tRNA ribosyltransferase-isomerase.